Here is a 376-residue protein sequence, read N- to C-terminus: 26S proteasome non-ATPase regulatory subunit 13 (376 aa).

One can recognise a PCI domain in the interval 171-338 (SYYKDALRFL…KRVHMTWVQP (168 aa)).

Component of the 19S proteasome regulatory particle complex. The 26S proteasome consists of a 20S core particle (CP) and two 19S regulatory subunits (RP). The regulatory particle is made of a lid composed of 9 subunits including PSMD13, a base containing 6 ATPases and few additional components.

Functionally, component of the 26S proteasome, a multiprotein complex involved in the ATP-dependent degradation of ubiquitinated proteins. This complex plays a key role in the maintenance of protein homeostasis by removing misfolded or damaged proteins, which could impair cellular functions, and by removing proteins whose functions are no longer required. Therefore, the proteasome participates in numerous cellular processes, including cell cycle progression, apoptosis, or DNA damage repair. This chain is 26S proteasome non-ATPase regulatory subunit 13, found in Gallus gallus (Chicken).